The chain runs to 78 residues: Antitoxin VapB27 (78 aa).

A SpoVT-AbrB domain is found at 1-45 (MKAVVDAAGRIVVPKPLREALGLQPGSTVEISRYGAGLHLIPTGR).

Belongs to the VapB family. Interacts with cognate toxin VapC27 and non-cognate toxins MazF6 and VapC40. Interaction with MazF6 and MazF9 partially neutralizes the toxins.

Its function is as follows. Antitoxin component of a type II toxin-antitoxin (TA) system. Cognate toxin is VapC27. Upon expression in E.coli partially counteracts the ribonuclease activity of non-cognate toxins MazF6 and MazF9. The sequence is that of Antitoxin VapB27 (vapB27) from Mycobacterium tuberculosis (strain ATCC 25618 / H37Rv).